Reading from the N-terminus, the 460-residue chain is DEAD-box helicase Dbp80 (460 aa).

At serine 26 the chain carries Phosphoserine. Threonine 30 is modified (phosphothreonine). A Q motif motif is present at residues 73–101; the sequence is KTFEALHLKASLLKGIYAMGFNTPSKIQE. Positions 106–276 constitute a Helicase ATP-binding domain; that stretch reads TLLADPPQNM…RLIVADPTII (171 aa). 119-126 serves as a coordination point for ATP; it reads SQSGTGKT. A DEAD box motif is present at residues 223 to 226; the sequence is DEAD. The Helicase C-terminal domain maps to 287-455; it reads NIKQYYVKCK…VLNTDSADDI (169 aa).

It belongs to the DEAD box helicase family. DDX19/DBP5 subfamily.

Its subcellular location is the cytoplasm. The protein resides in the nucleus. It is found in the nucleoplasm. The enzyme catalyses ATP + H2O = ADP + phosphate + H(+). Its function is as follows. ATP-dependent RNA helicase involved in mRNA export from the nucleus. The sequence is that of DEAD-box helicase Dbp80 (Dbp80) from Drosophila melanogaster (Fruit fly).